The primary structure comprises 81 residues: RNA-binding protein Hfq (81 aa).

Residues 10-70 (DLFLNSVRKS…ISTIMPSQPV (61 aa)) enclose the Sm domain.

This sequence belongs to the Hfq family. As to quaternary structure, homohexamer.

Its function is as follows. RNA chaperone that binds small regulatory RNA (sRNAs) and mRNAs to facilitate mRNA translational regulation in response to envelope stress, environmental stress and changes in metabolite concentrations. Also binds with high specificity to tRNAs. The chain is RNA-binding protein Hfq from Mesorhizobium japonicum (strain LMG 29417 / CECT 9101 / MAFF 303099) (Mesorhizobium loti (strain MAFF 303099)).